The chain runs to 307 residues: Metapyrocatechase (307 aa).

VOC domains follow at residues 7–122 (RPGH…LYAD) and 150–269 (RFDH…VFCG). Fe cation contacts are provided by His153, His214, and Glu265.

Belongs to the extradiol ring-cleavage dioxygenase family. As to quaternary structure, homotetramer. Fe(2+) is required as a cofactor.

The catalysed reaction is catechol + O2 = (2Z,4E)-2-hydroxy-6-oxohexa-2,4-dienoate + H(+). It participates in xenobiotic degradation; toluene degradation. The sequence is that of Metapyrocatechase (xylE) from Pseudomonas putida (Arthrobacter siderocapsulatus).